We begin with the raw amino-acid sequence, 1399 residues long: DNA-directed RNA polymerase subunit beta' (1399 aa).

Residues C70, C72, C85, and C88 each coordinate Zn(2+). 3 residues coordinate Mg(2+): D460, D462, and D464. Zn(2+)-binding residues include C814, C888, C895, and C898.

The protein belongs to the RNA polymerase beta' chain family. In terms of assembly, the RNAP catalytic core consists of 2 alpha, 1 beta, 1 beta' and 1 omega subunit. When a sigma factor is associated with the core the holoenzyme is formed, which can initiate transcription. Mg(2+) is required as a cofactor. It depends on Zn(2+) as a cofactor.

The catalysed reaction is RNA(n) + a ribonucleoside 5'-triphosphate = RNA(n+1) + diphosphate. In terms of biological role, DNA-dependent RNA polymerase catalyzes the transcription of DNA into RNA using the four ribonucleoside triphosphates as substrates. This Pseudomonas fluorescens (strain ATCC BAA-477 / NRRL B-23932 / Pf-5) protein is DNA-directed RNA polymerase subunit beta'.